The following is a 453-amino-acid chain: Iron-sulfur cluster assembly SufBD family protein slr0076 (453 aa).

Belongs to the iron-sulfur cluster assembly SufBD family.

This chain is Iron-sulfur cluster assembly SufBD family protein slr0076, found in Synechocystis sp. (strain ATCC 27184 / PCC 6803 / Kazusa).